We begin with the raw amino-acid sequence, 491 residues long: Cyclin-B1-5 (491 aa).

The 73-residue stretch at 275 to 347 (DMYSFYKEVE…VKAVPKRELQ (73 aa)) folds into the Cyclin N-terminal domain.

The protein belongs to the cyclin family. Cyclin AB subfamily. In terms of tissue distribution, expressed in roots, stems and flowers.

This Arabidopsis thaliana (Mouse-ear cress) protein is Cyclin-B1-5 (CYCB1-5).